The following is a 168-amino-acid chain: ATP synthase subunit b (168 aa).

A helical membrane pass occupies residues 9 to 29; that stretch reads AIPFGTIAYTLFIFLILLVML.

The protein belongs to the ATPase B chain family. In terms of assembly, F-type ATPases have 2 components, F(1) - the catalytic core - and F(0) - the membrane proton channel. F(1) has five subunits: alpha(3), beta(3), gamma(1), delta(1), epsilon(1). F(0) has three main subunits: a(1), b(2) and c(10-14). The alpha and beta chains form an alternating ring which encloses part of the gamma chain. F(1) is attached to F(0) by a central stalk formed by the gamma and epsilon chains, while a peripheral stalk is formed by the delta and b chains.

The protein localises to the cell membrane. Functionally, f(1)F(0) ATP synthase produces ATP from ADP in the presence of a proton or sodium gradient. F-type ATPases consist of two structural domains, F(1) containing the extramembraneous catalytic core and F(0) containing the membrane proton channel, linked together by a central stalk and a peripheral stalk. During catalysis, ATP synthesis in the catalytic domain of F(1) is coupled via a rotary mechanism of the central stalk subunits to proton translocation. In terms of biological role, component of the F(0) channel, it forms part of the peripheral stalk, linking F(1) to F(0). This is ATP synthase subunit b from Bacillus cereus (strain G9842).